A 197-amino-acid chain; its full sequence is Imidazoleglycerol-phosphate dehydratase (197 aa).

Belongs to the imidazoleglycerol-phosphate dehydratase family.

The protein localises to the cytoplasm. It catalyses the reaction D-erythro-1-(imidazol-4-yl)glycerol 3-phosphate = 3-(imidazol-4-yl)-2-oxopropyl phosphate + H2O. The protein operates within amino-acid biosynthesis; L-histidine biosynthesis; L-histidine from 5-phospho-alpha-D-ribose 1-diphosphate: step 6/9. The protein is Imidazoleglycerol-phosphate dehydratase of Chromobacterium violaceum (strain ATCC 12472 / DSM 30191 / JCM 1249 / CCUG 213 / NBRC 12614 / NCIMB 9131 / NCTC 9757 / MK).